A 225-amino-acid polypeptide reads, in one-letter code: UPF0758 protein BCE_4545 (225 aa).

One can recognise an MPN domain in the interval 103–225; sequence SIRSPEDCAT…FVSLKEKGHI (123 aa). Zn(2+) is bound by residues His174, His176, and Asp187. Residues 174–187 carry the JAMM motif motif; sequence HNHPSGDPAPSRED.

Belongs to the UPF0758 family.

The sequence is that of UPF0758 protein BCE_4545 from Bacillus cereus (strain ATCC 10987 / NRS 248).